We begin with the raw amino-acid sequence, 149 residues long: Large ribosomal subunit protein bL9 (149 aa).

This sequence belongs to the bacterial ribosomal protein bL9 family.

Its function is as follows. Binds to the 23S rRNA. This Haemophilus influenzae (strain PittEE) protein is Large ribosomal subunit protein bL9.